A 316-amino-acid polypeptide reads, in one-letter code: Beta-ketoacyl-[acyl-carrier-protein] synthase III 1 (316 aa).

Catalysis depends on residues cysteine 112 and histidine 243. The ACP-binding stretch occupies residues 244 to 248 (QANYR). Asparagine 273 is an active-site residue.

It belongs to the thiolase-like superfamily. FabH family. Homodimer.

It is found in the cytoplasm. It catalyses the reaction malonyl-[ACP] + acetyl-CoA + H(+) = 3-oxobutanoyl-[ACP] + CO2 + CoA. It participates in lipid metabolism; fatty acid biosynthesis. Functionally, catalyzes the condensation reaction of fatty acid synthesis by the addition to an acyl acceptor of two carbons from malonyl-ACP. Catalyzes the first condensation reaction which initiates fatty acid synthesis and may therefore play a role in governing the total rate of fatty acid production. Possesses both acetoacetyl-ACP synthase and acetyl transacylase activities. Its substrate specificity determines the biosynthesis of branched-chain and/or straight-chain of fatty acids. The chain is Beta-ketoacyl-[acyl-carrier-protein] synthase III 1 from Vibrio cholerae serotype O1 (strain ATCC 39315 / El Tor Inaba N16961).